Here is a 278-residue protein sequence, read N- to C-terminus: SLAM family member 8 (278 aa).

A signal peptide spans 1 to 20; the sequence is MWSLWSLLLFEALLPVVVVS. At 21–231 the chain is on the extracellular side; sequence VQVLSKVGDS…AASGKASYKD (211 aa). 2 N-linked (GlcNAc...) asparagine glycosylation sites follow: asparagine 83 and asparagine 154. In terms of domain architecture, Ig-like C2-type spans 126–213; that stretch reads PEVQVFTAAA…PVSWDMTTVT (88 aa). Residues cysteine 150 and cysteine 199 are joined by a disulfide bond. The helical transmembrane segment at 232 to 252 threads the bilayer; the sequence is VLLVVVPITLFLILAGLFGAW. Residues 253–278 lie on the Cytoplasmic side of the membrane; it reads HHGLCSGKKKDACTDGVLPETENALV.

The protein localises to the membrane. In terms of biological role, may play a role in B-lineage commitment and/or modulation of signaling through the B-cell receptor. In Mus musculus (Mouse), this protein is SLAM family member 8 (Slamf8).